The primary structure comprises 209 residues: Ribosomal RNA large subunit methyltransferase E (209 aa).

S-adenosyl-L-methionine contacts are provided by G63, W65, D83, D99, and D124. K164 serves as the catalytic Proton acceptor.

It belongs to the class I-like SAM-binding methyltransferase superfamily. RNA methyltransferase RlmE family.

It is found in the cytoplasm. The catalysed reaction is uridine(2552) in 23S rRNA + S-adenosyl-L-methionine = 2'-O-methyluridine(2552) in 23S rRNA + S-adenosyl-L-homocysteine + H(+). Specifically methylates the uridine in position 2552 of 23S rRNA at the 2'-O position of the ribose in the fully assembled 50S ribosomal subunit. This Aliivibrio salmonicida (strain LFI1238) (Vibrio salmonicida (strain LFI1238)) protein is Ribosomal RNA large subunit methyltransferase E.